Reading from the N-terminus, the 509-residue chain is Solute carrier family 2, facilitated glucose transporter member 4 (509 aa).

Over 1–23 (MPSGFQQIGSDDGEPPRQRVTGT) the chain is Cytoplasmic. The interval 7-13 (QIGSDDG) is interaction with SRFBP1. At serine 10 the chain carries Phosphoserine. Residues 24 to 44 (LVLAVFSAVLGSLQFGYNIGV) form a helical membrane-spanning segment. Over 45-80 (INAPQKVIEQSYNATWLGRQGPGGPDSIPQGTLTTL) the chain is Extracellular. N-linked (GlcNAc...) asparagine glycosylation occurs at asparagine 57. The chain crosses the membrane as a helical span at residues 81 to 101 (WALSVAIFSVGGMISSFLIGI). Residues 102-110 (ISQWLGRKR) are Cytoplasmic-facing. Residues 111-131 (AMLANNVLAVLGGALMGLANA) form a helical membrane-spanning segment. The Extracellular segment spans residues 132–141 (AASYEILILG). Residues 142–162 (RFLIGAYSGLTSGLVPMYVGE) form a helical membrane-spanning segment. The Cytoplasmic segment spans residues 163 to 170 (IAPTHLRG). Residues 171–191 (ALGTLNQLAIVIGILVAQVLG) form a helical membrane-spanning segment. Glutamine 177 provides a ligand contact to D-glucose. Topologically, residues 192–200 (LESMLGTAT) are extracellular. Residues 201–221 (LWPLLLALTVLPALLQLILLP) traverse the membrane as a helical segment. Residues 222-286 (FCPESPRYLY…QLLGSRTHRQ (65 aa)) lie on the Cytoplasmic side of the membrane. Residue cysteine 223 is the site of S-palmitoyl cysteine attachment. Serine 274 carries the phosphoserine; by SGK1 modification. The helical transmembrane segment at 287 to 307 (PLIIAVVLQLSQQLSGINAVF) threads the bilayer. Residues 298–299 (QQ) and asparagine 304 contribute to the D-glucose site. At 308-322 (YYSTSIFESAGVGQP) the chain is on the extracellular side. A helical transmembrane segment spans residues 323 to 343 (AYATIGAGVVNTVFTLVSVLL). Asparagine 333 contacts D-glucose. At 344–352 (VERAGRRTL) the chain is on the cytoplasmic side. The chain crosses the membrane as a helical span at residues 353–373 (HLLGLAGMCGCAILMTVALLL). Residues 374-384 (LERVPAMSYVS) lie on the Extracellular side of the membrane. Residues 385 to 405 (IVAIFGFVAFFEIGPGPIPWF) traverse the membrane as a helical segment. D-glucose is bound by residues glutamate 396 and tryptophan 404. Over 406 to 416 (IVAELFSQGPR) the chain is Cytoplasmic. The chain crosses the membrane as a helical span at residues 417–437 (PAAMAVAGFSNWTCNFIVGMG). At 438-444 (FQYVADA) the chain is on the extracellular side. Residues 445–465 (MGPYVFLLFAVLLLGFFIFTF) traverse the membrane as a helical segment. Residues 466 to 508 (LKVPETRGRTFDQISAAFRRTPSLLEQEVKPSTELEYLGPDEN) lie on the Cytoplasmic side of the membrane. Residue threonine 486 is modified to Phosphothreonine. The residue at position 488 (serine 488) is a Phosphoserine. The Dileucine internalization motif signature appears at 489–490 (LL).

Belongs to the major facilitator superfamily. Sugar transporter (TC 2.A.1.1) family. Glucose transporter subfamily. As to quaternary structure, binds to DAXX. Interacts via its N-terminus with SRFBP1. Interacts with NDUFA9. Interacts with TRARG1; the interaction is required for proper SLC2A4 recycling after insulin stimulation. Sumoylated. In terms of processing, palmitoylated. Palmitoylation by ZDHHC7 controls the insulin-dependent translocation of GLUT4 to the plasma membrane. In terms of tissue distribution, expressed in skeletal and cardiac muscles. Expressed in brown and white adipose tissues.

The protein localises to the cell membrane. It localises to the endomembrane system. It is found in the cytoplasm. Its subcellular location is the perinuclear region. It carries out the reaction D-glucose(out) = D-glucose(in). Insulin-regulated facilitative glucose transporter, which plays a key role in removal of glucose from circulation. Response to insulin is regulated by its intracellular localization: in the absence of insulin, it is efficiently retained intracellularly within storage compartments in muscle and fat cells. Upon insulin stimulation, translocates from these compartments to the cell surface where it transports glucose from the extracellular milieu into the cell. This is Solute carrier family 2, facilitated glucose transporter member 4 from Mus musculus (Mouse).